Here is a 26-residue protein sequence, read N- to C-terminus: Unknown protein 16 (26 aa).

Positions 1–26 are disordered; it reads AINSESGVRSVVPQPCNALPNQGPEK.

The protein is Unknown protein 16 of Pseudotsuga menziesii (Douglas-fir).